The following is a 354-amino-acid chain: Ornithine carbamoyltransferase, catabolic (354 aa).

Carbamoyl phosphate is bound by residues 67 to 70 (STRT), Q94, R118, and 145 to 148 (HPTQ). L-ornithine is bound by residues N177, D241, and 245–246 (SM). Carbamoyl phosphate contacts are provided by residues 284–285 (CL) and R329.

This sequence belongs to the aspartate/ornithine carbamoyltransferase superfamily. OTCase family.

The protein localises to the cytoplasm. The enzyme catalyses carbamoyl phosphate + L-ornithine = L-citrulline + phosphate + H(+). It functions in the pathway amino-acid degradation; L-arginine degradation via ADI pathway; carbamoyl phosphate from L-arginine: step 2/2. Its function is as follows. Reversibly catalyzes the transfer of the carbamoyl group from carbamoyl phosphate (CP) to the N(epsilon) atom of ornithine (ORN) to produce L-citrulline. The protein is Ornithine carbamoyltransferase, catabolic (arcB) of Lactococcus lactis subsp. lactis (strain IL1403) (Streptococcus lactis).